Here is a 287-residue protein sequence, read N- to C-terminus: Complement C1q-like protein 2 (287 aa).

An N-terminal signal peptide occupies residues 1–21 (MALGLLIAVPLLLQAAPPGAA). The disordered stretch occupies residues 65–144 (LSANPPPPFI…GTGGGGDTEG (80 aa)). The Collagen-like domain maps to 76–118 (GPKGDPGRPGKPGPRGPPGEPGPPGPRGPPGEKGDSGRPGLPG). The span at 84 to 104 (PGKPGPRGPPGEPGPPGPRGP) shows a compositional bias: pro residues. Residues 127–141 (GGVGVVSGGTGGGGD) are compositionally biased toward gly residues. The C1q domain maps to 154–287 (FSGPKIAFYV…TFSGFLLYPD (134 aa)).

In terms of assembly, forms homotrimers which can further assemble to form higher-order oligomeric complexes. Interacts with ADGRB3. May interact with ERFE. Forms heterooligomers with C1QL3 and C1QL4, when proteins are coexpressed; this interaction does not occur after secretion. In terms of processing, glycosylated, but not with N-linked glycans. As to expression, highest expression in eye, followed by placenta and brain, intermediate expression in adipose tissue and lowest expression in lymph node and testis.

Its subcellular location is the secreted. Its function is as follows. May regulate the number of excitatory synapses that are formed on hippocampus neurons. Has no effect on inhibitory synapses. The polypeptide is Complement C1q-like protein 2 (C1ql2) (Mus musculus (Mouse)).